Here is a 267-residue protein sequence, read N- to C-terminus: MRSSWTPLGPPVSQDRIITSFPKWYTPDACLQLKEHFHSRVSTACQHRNTGTAGLRLSKVVVVGDLYVGKTSLIHRLCKNVFDHDYKATIGVDFEIERFEIAGIPYSLQIWDTAGQEKFKCIASAYYRGAQVIITAFDLTDVQTLEHTRQWLEDVLRENEAGSCFIFLVGTKKDLLSGAACEQAEAEAVHLANEMQAEYWSVSAKTGENVKAFFSRVAALAFEQSVLQDLEKRPSTQSQVGDGDGDLIRIEVPKTQENKRPPGLGCC.

GTP-binding residues include Val-68, Gly-69, Lys-70, Thr-71, Ser-72, Asp-83, Tyr-86, and Thr-89. Thr-71 provides a ligand contact to Mg(2+). The Switch 1 signature appears at 76-94 (RLCKNVFDHDYKATIGVDF). Residues Thr-89 and Asp-112 each coordinate Mg(2+). A Switch 2 motif is present at residues 113–132 (TAGQEKFKCIASAYYRGAQV). Positions 115, 172, 174, 203, 204, and 205 each coordinate GTP. 2 S-geranylgeranyl cysteine lipidation sites follow: Cys-266 and Cys-267.

It belongs to the small GTPase superfamily. Rab family. Requires Mg(2+) as cofactor.

Its subcellular location is the golgi apparatus membrane. It carries out the reaction GTP + H2O = GDP + phosphate + H(+). With respect to regulation, regulated by guanine nucleotide exchange factors (GEFs) which promote the exchange of bound GDP for free GTP. Regulated by GTPase activating proteins (GAPs) which increase the GTP hydrolysis activity. Inhibited by GDP dissociation inhibitors (GDIs). Functionally, the small GTPases Rab are key regulators of intracellular membrane trafficking, from the formation of transport vesicles to their fusion with membranes. Rabs cycle between an inactive GDP-bound form and an active GTP-bound form that is able to recruit to membranes different sets of downstream effectors directly responsible for vesicle formation, movement, tethering and fusion. In Mus musculus (Mouse), this protein is Ras-related protein Rab-36.